The primary structure comprises 269 residues: uncharacterized protein (269 aa).

This is an uncharacterized protein from Acanthamoeba polyphaga (Amoeba).